The sequence spans 733 residues: Hypermethylated in cancer 1 protein (733 aa).

In terms of domain architecture, BTB spans 47 to 110; the sequence is CDVIIVVQNA…IYTGRLTDSV (64 aa). The interval 154–315 is mediates HDAC-dependent transcriptional repression; that stretch reads KYCHLRGGGS…PFRGSGGSPG (162 aa). Arg-159 carries the post-translational modification Omega-N-methylarginine. The segment at 189–209 is disordered; it reads YSSPAGPPPPPAAEPPSGPDA. Residues 193–206 are compositionally biased toward pro residues; the sequence is AGPPPPPAAEPPSG. A Phosphoserine modification is found at Ser-237. The tract at residues 241 to 247 is interaction with CTBP1; it reads GLDLSKK. The disordered stretch occupies residues 241–421; that stretch reads GLDLSKKSPP…PGGHLEGYPC (181 aa). Position 248 is a phosphoserine (Ser-248). Position 333 is an N6-acetyllysine; alternate (Lys-333). Lys-333 participates in a covalent cross-link: Glycyl lysine isopeptide (Lys-Gly) (interchain with G-Cter in SUMO); alternate. Positions 344-361 are enriched in basic and acidic residues; it reads ELVRDRGSPGERLEERGG. At Ser-366 the chain carries Phosphoserine. A compositionally biased stretch (pro residues) spans 368 to 380; the sequence is GGPPLGLVPPPRY. C2H2-type zinc fingers lie at residues 437 to 464, 507 to 534, 535 to 562, 563 to 590, and 591 to 618; these read YVCIPCGKGFPSSEQLNAHVEAHVEEEE, YRCASCDKSYKDPATLRQHEKTHWLTRP, YPCTICGKKFTQRGTMTRHMRSHLGLKP, FACDACGMRFTRQYRLTEHMRIHSGEKP, and YECQVCGGKFAQQRNLISHMKMHAVGGA. Ser-704 is modified (phosphoserine).

The protein belongs to the krueppel C2H2-type zinc-finger protein family. Hic subfamily. As to quaternary structure, self-associates. Interacts with HIC2. Interacts with CTBP1 and CTBP2. Interacts with TCF7L2 and ARID1A. Interacts with MTA1 and MBD3; indicative for an association with the NuRD complex. Interacts with SIRT1. In terms of processing, acetylated on several residues, including Lys-333. Lys-333 is deacetylated by SIRT1. Post-translationally, sumoylated on Lys-333 by a PIAS family member, which enhances interaction with MTA1, positively regulates transcriptional repression activity and is enhanced by HDAC4. In terms of tissue distribution, ubiquitously expressed with highest levels in heart and lung.

The protein resides in the nucleus. Functionally, transcriptional repressor. Recognizes and binds to the consensus sequence '5-[CG]NG[CG]GGGCA[CA]CC-3'. May act as a tumor suppressor. Involved in development of head, face, limbs and ventral body wall. Involved in down-regulation of SIRT1 and thereby is involved in regulation of p53/TP53-dependent apoptotic DNA-damage responses. The specific target gene promoter association seems to be depend on corepressors, such as CTBP1 or CTBP2 and MTA1. In cooperation with MTA1 (indicative for an association with the NuRD complex) represses transcription from CCND1/cyclin-D1 and CDKN1C/p57Kip2 specifically in quiescent cells. Involved in regulation of the Wnt signaling pathway probably by association with TCF7L2 and preventing TCF7L2 and CTNNB1 association with promoters of TCF-responsive genes. Seems to repress transcription from E2F1 and ATOH1 which involves ARID1A, indicative for the participation of a distinct SWI/SNF-type chromatin-remodeling complex. Probably represses transcription from ACKR3, FGFBP1 and EFNA1. The chain is Hypermethylated in cancer 1 protein (Hic1) from Mus musculus (Mouse).